Consider the following 302-residue polypeptide: MESNVHIPILLNEVLSAFNLKETDVVIDLTLGRAGHSQEMLKKIPKGLLIGIDKDKSAITFSKEKLEQIGSNFKLFHSDFSKISDLLKELKISKVNAILIDLGISSPQIDNANRGFSYNKESRLDMRMNLDQKLDAHFIVNSYSEEQLKNLLYRNAEIKNSRQIAKIITSNRPIETTLQLSVILKKYLPAFIVRKKDPSKAVFQALRVEVNDEINSLNFLLKNLVSILEENGKVAIITFNSIEDRIVKKYFGSFIKDDVLAFLPTKKEKEFEVKTYLPSKKELEENPRSKSAKMRVLKKIER.

S-adenosyl-L-methionine-binding positions include 34–36, Asp-53, Phe-80, Asp-101, and Gln-108; that span reads AGH. Positions 283-302 are disordered; it reads LEENPRSKSAKMRVLKKIER. The span at 290-302 shows a compositional bias: basic residues; the sequence is KSAKMRVLKKIER.

The protein belongs to the methyltransferase superfamily. RsmH family.

The protein localises to the cytoplasm. The enzyme catalyses cytidine(1402) in 16S rRNA + S-adenosyl-L-methionine = N(4)-methylcytidine(1402) in 16S rRNA + S-adenosyl-L-homocysteine + H(+). In terms of biological role, specifically methylates the N4 position of cytidine in position 1402 (C1402) of 16S rRNA. The sequence is that of Ribosomal RNA small subunit methyltransferase H from Mycoplasma mobile (strain ATCC 43663 / 163K / NCTC 11711) (Mesomycoplasma mobile).